We begin with the raw amino-acid sequence, 128 residues long: DNA-directed RNA polymerase subunit omega (128 aa).

It belongs to the RNA polymerase subunit omega family. In terms of assembly, the RNAP catalytic core consists of 2 alpha, 1 beta, 1 beta' and 1 omega subunit. When a sigma factor is associated with the core the holoenzyme is formed, which can initiate transcription.

The enzyme catalyses RNA(n) + a ribonucleoside 5'-triphosphate = RNA(n+1) + diphosphate. In terms of biological role, promotes RNA polymerase assembly. Latches the N- and C-terminal regions of the beta' subunit thereby facilitating its interaction with the beta and alpha subunits. The sequence is that of DNA-directed RNA polymerase subunit omega from Azorhizobium caulinodans (strain ATCC 43989 / DSM 5975 / JCM 20966 / LMG 6465 / NBRC 14845 / NCIMB 13405 / ORS 571).